The following is a 1218-amino-acid chain: NACHT, LRR and PYD domains-containing protein 1a allele 1 (1218 aa).

The interval 1–61 is disordered; that stretch reads MEESQSKQES…SLPGWSSTSN (61 aa). The span at 7–29 shows a compositional bias: polar residues; the sequence is KQESNTRVAQHGSQQDVDPTFQT. An NACHT domain is found at 175-484; that stretch reads QLVIIEGAAG…EFFAAMSYIL (310 aa). 181–188 is a binding site for ATP; that stretch reads GAAGIGKS. LRR repeat units follow at residues 343 to 364, 673 to 693, and 730 to 750; these read KERN…LTLC, NLEE…RSLC, and RLAE…RQLC. Positions 799 to 815 are enriched in polar residues; sequence TMPTENTDGEESLTSSK. A disordered region spans residues 799 to 842; it reads TMPTENTDGEESLTSSKQQQQQSGDKHMEPLGTDDDFWGPSGPV. Residues 835 to 968 form a ZU5 region; that stretch reads FWGPSGPVST…HFAVLENPSF (134 aa). Positions 835–1118 constitute an FIIND domain; that stretch reads FWGPSGPVST…LRPALPRMAS (284 aa). Residues 969 to 1118 form a UPA region; it reads SPMGVLLRMI…LRPALPRMAS (150 aa). Residues 1122–1211 form the CARD domain; that stretch reads DAPALLHFVD…HLIMDLLEKS (90 aa).

Belongs to the NLRP family. As to quaternary structure, interacts (via LRR repeats) with BCL2 and BCL2L1 (via the loop between motifs BH4 and BH3). Interacts with NOD2; this interaction is enhanced in the presence of muramyl dipeptide (MDP) and increases IL1B release. Interacts with EIF2AK2/PKR; this interaction requires EIF2AK2 activity, is accompanied by EIF2AK2 autophosphorylation and promotes inflammasome assembly in response to danger-associated signals. Interacts with MEFV; this interaction targets Nlrp1a to degradation by autophagy, hence preventing excessive IL1B- and IL18-mediated inflammation. Interacts with DPP9; leading to inhibit activation of the inflammasome. DPP9 acts via formation of a ternary complex, composed of a DPP9 homodimer, one full-length NLRP1 protein, and one cleaved C-terminus of Nlrp1a (NACHT, LRR and PYD domains-containing protein 1a, C-terminus). Interacts with DPP8; leading to inhibit activation of the inflammasome, probably via formation of a ternary complex with DPP8. In terms of assembly, interacts with the C-terminal part of Nlrp1a (NACHT, LRR and PYD domains-containing protein 1a, C-terminus) in absence of pathogens and other damage-associated signals. Interacts with the N-terminal part of Nlrp1a (NACHT, LRR and PYD domains-containing protein 1a, N-terminus) in absence of pathogens and other damage-associated signals. Homomultimer; forms the Nlrp1a inflammasome polymeric complex, a filament composed of homopolymers of this form in response to pathogens and other damage-associated signals. The Nlrp1a inflammasome polymeric complex directly recruits pro-caspase-1 (proCASP1) independently of PYCARD/ASC. Interacts (via CARD domain) with CASP1 (via CARD domain); leading to CASP1 activation. Post-translationally, autocatalytically cleaved. Autocatalytic cleavage in FIIND region occurs constitutively, prior to activation signals, and is required for inflammasome activity (IL1B release), possibly by facilitating CASP1 binding. Both N- and C-terminal parts remain associated non-covalently. In terms of processing, (Microbial infection) Cleavage by B.anthracis lethal toxin (LT) endopeptidase promotes ubiquitination and degradation of the N-terminal part, releasing the cleaved C-terminal part of the protein (NACHT, LRR and PYD domains-containing protein 1a, C-terminus), which polymerizes and forms the Nlrp1a inflammasome. Ubiquitinated in response to pathogen-associated signals, leading to its degradation by the proteasome and subsequent release of the cleaved C-terminal part of the protein (NACHT, LRR and PYD domains-containing protein 1a, C-terminus), which polymerizes and forms the Nlrp1a inflammasome.

It is found in the cytoplasm. Its subcellular location is the cytosol. The protein localises to the nucleus. It localises to the inflammasome. With respect to regulation, activated by cleavage by B.anthracis lethal toxin (LT) endopeptidase. Cleavage by LT promotes ubiquitination and degradation of the N-terminal part, releasing the cleaved C-terminal part of the protein (NACHT, LRR and PYD domains-containing protein 1a, C-terminus), which polymerizes and forms the Nlrp1a inflammasome. Nlrp1a inflammasome is inhibited by DPP8 and DPP9, which sequester the C-terminal fragment of Nlrp1a (NACHT, LRR and PYD domains-containing protein 1a, C-terminus) in a ternary complex, thereby preventing Nlrp1a oligomerization and activation. Nlrp1a inflammasome is weakly activated by Val-boroPro (Talabostat, PT-100), an inhibitor of dipeptidyl peptidases DPP8 and DPP9. Val-boroPro relieves inhibition of DPP8 and/or DPP9 by promoting disruption of the ternary complex, releasing its C-terminal part from autoinhibition. Weakly activated by Toxoplasma gondii. In terms of biological role, acts as the sensor component of the Nlrp1a inflammasome, which mediates inflammasome activation in response to various pathogen-associated signals, leading to subsequent pyroptosis. Inflammasomes are supramolecular complexes that assemble in the cytosol in response to pathogens and other damage-associated signals and play critical roles in innate immunity and inflammation. Acts as a recognition receptor (PRR): recognizes specific pathogens and other damage-associated signals, such as B.anthracis lethal toxin (LT) or Val-boroPro inhibitor, and mediates the formation of the inflammasome polymeric complex. In response to pathogen-associated signals, the N-terminal part of Nlrp1a is degraded by the proteasome, releasing the cleaved C-terminal part of the protein (NACHT, LRR and PYD domains-containing protein 1a, C-terminus), which polymerizes to initiate the formation of the inflammasome complex: the inflammasome directly recruits pro-caspase-1 (proCASP1) independently of PYCARD/ASC and promotes caspase-1 (CASP1) activation, which subsequently cleaves and activates inflammatory cytokines IL1B and IL18 and gasdermin-D (GSDMD), leading to pyroptosis. In the absence of GSDMD expression, the Nlrp1a inflammasome is able to recruit and activate CASP8, leading to activation of gasdermin-E (GSDME). Functionally, constitutes the precursor of the Nlrp1a inflammasome, which mediates autoproteolytic processing within the FIIND domain to generate the N-terminal and C-terminal parts, which are associated non-covalently in absence of pathogens and other damage-associated signals. Its function is as follows. Regulatory part that prevents formation of the Nlrp1a inflammasome: in absence of pathogens and other damage-associated signals, interacts with the C-terminal part of Nlrp1a (NACHT, LRR and PYD domains-containing protein 1a, C-terminus), preventing activation of the Nlrp1a inflammasome. In response to pathogen-associated signals, this part is ubiquitinated by the N-end rule pathway and degraded by the proteasome, releasing the cleaved C-terminal part of the protein, which polymerizes and forms the Nlrp1a inflammasome. Constitutes the active part of the Nlrp1a inflammasome. In absence of pathogens and other damage-associated signals, interacts with the N-terminal part of Nlrp1a (NACHT, LRR and PYD domains-containing protein 1a, N-terminus), preventing activation of the Nlrp1a inflammasome. In response to pathogen-associated signals, the N-terminal part of Nlrp1a is degraded by the proteasome, releasing this form, which polymerizes to form the Nlrp1a inflammasome complex: the Nlrp1a inflammasome complex then directly recruits pro-caspase-1 (proCASP1) and promotes caspase-1 (CASP1) activation, leading to gasdermin-D (GSDMD) cleavage and subsequent pyroptosis. This Rattus norvegicus (Rat) protein is NACHT, LRR and PYD domains-containing protein 1a allele 1.